We begin with the raw amino-acid sequence, 518 residues long: Glutamate--cysteine ligase (518 aa).

Belongs to the glutamate--cysteine ligase type 1 family. Type 1 subfamily.

It carries out the reaction L-cysteine + L-glutamate + ATP = gamma-L-glutamyl-L-cysteine + ADP + phosphate + H(+). It participates in sulfur metabolism; glutathione biosynthesis; glutathione from L-cysteine and L-glutamate: step 1/2. The protein is Glutamate--cysteine ligase of Escherichia coli O139:H28 (strain E24377A / ETEC).